The following is a 285-amino-acid chain: UstYa family oxidase phomYe (285 aa).

Residues 32-54 form a helical membrane-spanning segment; sequence LFYGWKGIAFLSTLTNVLFISGF. Residues 143–165 form a disordered region; it reads YGFGTPLTGPGSEGNEHDPTPWT. Positions 177-181 match the HXXHC 1 motif; the sequence is HQLHC. Residue Asn202 is glycosylated (N-linked (GlcNAc...) asparagine). The HXXHC 2 motif lies at 209-213; sequence HVDHC.

It belongs to the ustYa family.

It is found in the membrane. Its pathway is mycotoxin biosynthesis. Functionally, ustYa family oxidase; part of the gene cluster that mediates the biosynthesis of the phomopsins, a group of hexapeptide mycotoxins which infects lupins and causes lupinosis disease in livestock. Within the pathway, phomYe catalyzes the desaturation of the Pro moiety into 3,4-dehydroproline (dPro). The pathway starts with the processing of the precursor phomA by several endopeptidases including kexin proteases as well as the cluster-specific S41 family peptidase phomP1 and the oligopeptidase phomG to produce 10 identical copies of the hexapeptide Tyr-Val-Ile-Pro-Ile-Asp. After being excised from the precursor peptide, the core peptides are cyclized and modified post-translationally by enzymes encoded within the gene cluster. The timing and order of proteolysis of the phomA precursor and PTMs are still unknown. Two tyrosinase-like enzymes, phomQ1 and phomQ2, catalyze the chlorination and hydroxylation of Tyr, respectively. PhomYb, is proposed to be involved in the construction of the macrocyclic structure. The other 4 ustYa family proteins may be involved in PTMs that generate the unique structure of phomopsin A. PhomYa is required for the hydroxylation of C-beta of Tyr. PhomYc, phomYd, and phomYe are responsible for the biosynthesis of 2,3-dehydroisoleucine (dIle), 2,3-dehydroaspartic acid (dAsp), and 3,4-dehydroproline (dPro), respectively. While dIle formation by phomYc is indispensable for the installation of dAsp by phomYd, the order of the other PTMs have not been elucidated yet. Most of the biosynthetic enzymes likely have broad substrate specificity, and thus, there might be a metabolic grid from a precursor to phomopsin A. The enzyme(s) responsible for the biosynthesis of 3,4-dehydrovaline (dVal) have also not been identified yet. Finally, phomM acts as an S-adenosylmethionine-dependent alpha-N-methyltransferase that catalyzes two successive N-methylation reactions, converting N-desmethyl-phomopsin A to phomopsin A and phomopsin A further to an N,N-dimethylated congener called phomopsin E. This is UstYa family oxidase phomYe from Diaporthe leptostromiformis (Lupinosis disease fungus).